Reading from the N-terminus, the 201-residue chain is Ras-related protein Rab-9A (201 aa).

Ala2 carries the N-acetylalanine modification. Residue Gly17 participates in GDP binding. Residues Gly17, Val18, Gly19, Lys20, Ser21, Ser22, Thr34, His38, and Thr39 each coordinate GTP. 4 residues coordinate GDP: Gly19, Lys20, Ser21, and Ser22. Ser21 is a Mg(2+) binding site. Residues 31 to 42 carry the Switch 1 motif; sequence KFDTQLFHTIGV. Residues Thr39 and Asp62 each contribute to the Mg(2+) site. The Switch 2 signature appears at 64–78; the sequence is AGQERFRSLRTPFYR. 4 residues coordinate GTP: Gly65, Asn124, Lys125, and Asp127. Residues Asn124, Lys125, Asp127, Ala155, and Lys156 each coordinate GDP. Lys156 contributes to the GTP binding site. The residue at position 179 (Ser179) is a Phosphoserine. Position 187 is a phosphothreonine (Thr187). Residues Cys200 and Cys201 are each lipidated (S-geranylgeranyl cysteine).

The protein belongs to the small GTPase superfamily. Rab family. In terms of assembly, interacts (preferentially in its GTP-bound form) with GCC2 (via its GRIP domain). Interacts (GTP-bound form) with SGSM1; the GDP-bound form has much lower affinity for SGSM1. Interacts with SGSM2. The GTP-bound form but not the GDP-bound form interacts with HPS4 and the BLOC-3 complex (heterodimer of HPS1 and HPS4) but does not interact with HPS1 alone. Interacts (GTP-bound form) with NDE1; two RAB9A-GTP molecules lie on the opposite sides of the NDE1 homodimer; the interaction leads to RAB9A-dynein motor tethering. Interacts (GTP-bound form) with NDEL1. It depends on Mg(2+) as a cofactor.

Its subcellular location is the cell membrane. It is found in the endoplasmic reticulum membrane. It localises to the golgi apparatus membrane. The protein localises to the late endosome. The protein resides in the cytoplasmic vesicle. Its subcellular location is the phagosome membrane. It is found in the phagosome. It localises to the cytoplasmic vesicle membrane. The protein localises to the melanosome. The enzyme catalyses GTP + H2O = GDP + phosphate + H(+). With respect to regulation, regulated by guanine nucleotide exchange factors (GEFs) which promote the exchange of bound GDP for free GTP. Regulated by GTPase activating proteins (GAPs) which increase the GTP hydrolysis activity. Inhibited by GDP dissociation inhibitors (GDIs). Its function is as follows. The small GTPases Rab are key regulators of intracellular membrane trafficking, from the formation of transport vesicles to their fusion with membranes. Rabs cycle between an inactive GDP-bound form and an active GTP-bound form that is able to recruit to membranes different sets of downstream effectors directly responsible for vesicle formation, movement, tethering and fusion. RAB9A is involved in the transport of proteins between the endosomes and the trans-Golgi network (TGN). Specifically uses NDE1/NDEL1 as an effector to interact with the dynein motor complex in order to control retrograde trafficking of RAB9-associated late endosomes to the TGN. Involved in the recruitment of SGSM2 to melanosomes and is required for the proper trafficking of melanogenic enzymes TYR, TYRP1 and DCT/TYRP2 to melanosomes in melanocytes. The protein is Ras-related protein Rab-9A (RAB9A) of Canis lupus familiaris (Dog).